The sequence spans 437 residues: MANVVVIGAQWGDEGKGKITDLLSRSADVVVRYQGGVNAGHTIVVDDRVLKLHLIPSGILYPETICLIGSGTVVDPKVMLGELDMLIANDIDISGLQLASTAHVTMPYHRLLDLAMEKQRGDRRIGTTGRGIGPTYADKSQRSGIRVIDLLDEARLRERLEGPLQEKNQLLETIYGVEPLDAETVIKEYLGYGKRLAPHVVECTQAIHQAARARKNILFEGAQGTLLDLDHGTYPYVTSSNPVSGGACIGAGVGPTLIDRVIGVAKAYTTRVGEGPFPTELSGRLNDQLTERGGEFGTTTGRRRRCGWFDGVIGRYAVQVNGLDCLAVTKLDVLDELDAIQVCVAYELDGERIEHFPSSAEDFARCNPLFETLPGWQCSTEDCRKLEDLPDAAMAYLRFLADLMEVPIAIVSLGASRDQTIVVEDPIHGPKRALLSA.

Residues 12 to 18 (GDEGKGK) and 40 to 42 (GHT) contribute to the GTP site. Residue Asp13 is the Proton acceptor of the active site. The Mg(2+) site is built by Asp13 and Gly40. IMP is bound by residues 13–16 (DEGK), 38–41 (NAGH), Thr128, Arg142, Gln223, Thr238, and Arg302. His41 (proton donor) is an active-site residue. 298–304 (TTTGRRR) is a binding site for substrate. GTP contacts are provided by residues Arg304, 330 to 332 (KLD), and 412 to 414 (SLG).

Belongs to the adenylosuccinate synthetase family. As to quaternary structure, homodimer. Mg(2+) is required as a cofactor.

Its subcellular location is the cytoplasm. It carries out the reaction IMP + L-aspartate + GTP = N(6)-(1,2-dicarboxyethyl)-AMP + GDP + phosphate + 2 H(+). The protein operates within purine metabolism; AMP biosynthesis via de novo pathway; AMP from IMP: step 1/2. Plays an important role in the de novo pathway of purine nucleotide biosynthesis. Catalyzes the first committed step in the biosynthesis of AMP from IMP. This is Adenylosuccinate synthetase from Parasynechococcus marenigrum (strain WH8102).